The chain runs to 180 residues: Putative manganese efflux pump MntP (180 aa).

A run of 6 helical transmembrane segments spans residues 6–26 (LMAL…GIGL), 34–54 (ILQI…TGWL), 67–87 (AAVI…WAAW), 102–122 (FWGL…AGFT), 131–151 (LLAA…GLVF), and 160–180 (GERA…KLFF).

This sequence belongs to the MntP (TC 9.B.29) family.

The protein localises to the cell membrane. Probably functions as a manganese efflux pump. The chain is Putative manganese efflux pump MntP from Pelotomaculum thermopropionicum (strain DSM 13744 / JCM 10971 / SI).